The chain runs to 168 residues: tRNA-splicing endonuclease (168 aa).

Residues tyrosine 107, histidine 114, and lysine 145 contribute to the active site.

This sequence belongs to the tRNA-intron endonuclease family. Archaeal short subfamily. In terms of assembly, homotetramer; although the tetramer contains four active sites, only two participate in the cleavage. Therefore, it should be considered as a dimer of dimers.

It catalyses the reaction pretRNA = a 3'-half-tRNA molecule with a 5'-OH end + a 5'-half-tRNA molecule with a 2',3'-cyclic phosphate end + an intron with a 2',3'-cyclic phosphate and a 5'-hydroxyl terminus.. In terms of biological role, endonuclease that removes tRNA introns. Cleaves pre-tRNA at the 5'- and 3'-splice sites to release the intron. The products are an intron and two tRNA half-molecules bearing 2',3' cyclic phosphate and 5'-OH termini. Recognizes a pseudosymmetric substrate in which 2 bulged loops of 3 bases are separated by a stem of 4 bp. The protein is tRNA-splicing endonuclease of Thermococcus kodakarensis (strain ATCC BAA-918 / JCM 12380 / KOD1) (Pyrococcus kodakaraensis (strain KOD1)).